Here is a 334-residue protein sequence, read N- to C-terminus: Heat-inducible transcription repressor HrcA (334 aa).

The protein belongs to the HrcA family.

Negative regulator of class I heat shock genes (grpE-dnaK-dnaJ and groELS operons). Prevents heat-shock induction of these operons. In Acidovorax sp. (strain JS42), this protein is Heat-inducible transcription repressor HrcA.